Reading from the N-terminus, the 332-residue chain is UPF0194 membrane protein YbhG (332 aa).

The N-terminal stretch at 1-16 (MMKKPVVIGLAVVVLA) is a signal peptide. A coiled-coil region spans residues 108–209 (EEIAQAAAAV…LNLQDSTLIA (102 aa)).

The protein belongs to the UPF0194 family.

Its subcellular location is the periplasm. This is UPF0194 membrane protein YbhG from Escherichia coli O45:K1 (strain S88 / ExPEC).